The following is a 572-amino-acid chain: Proline--tRNA ligase (572 aa).

This sequence belongs to the class-II aminoacyl-tRNA synthetase family. ProS type 1 subfamily. Homodimer. May form a tertiary complex with YbaK and t-RNA(Pro).

The protein localises to the cytoplasm. It catalyses the reaction tRNA(Pro) + L-proline + ATP = L-prolyl-tRNA(Pro) + AMP + diphosphate. Catalyzes the attachment of proline to tRNA(Pro) in a two-step reaction: proline is first activated by ATP to form Pro-AMP and then transferred to the acceptor end of tRNA(Pro). As ProRS can inadvertently accommodate and process non-cognate amino acids such as alanine and cysteine, to avoid such errors it has two additional distinct editing activities against alanine. One activity is designated as 'pretransfer' editing and involves the tRNA(Pro)-independent hydrolysis of activated Ala-AMP. The other activity is designated 'posttransfer' editing and involves deacylation of mischarged Ala-tRNA(Pro). The misacylated Cys-tRNA(Pro) is not edited by ProRS, but is probably edited in trans by YbaK. This chain is Proline--tRNA ligase, found in Haemophilus influenzae (strain ATCC 51907 / DSM 11121 / KW20 / Rd).